A 163-amino-acid chain; its full sequence is ATP synthase subunit b (163 aa).

Residues 10–29 traverse the membrane as a helical segment; sequence VFMQMFHFLLMLVVLRLFAY.

The protein belongs to the ATPase B chain family. In terms of assembly, F-type ATPases have 2 components, F(1) - the catalytic core - and F(0) - the membrane proton channel. F(1) has five subunits: alpha(3), beta(3), gamma(1), delta(1), epsilon(1). F(0) has three main subunits: a(1), b(2) and c(10-14). The alpha and beta chains form an alternating ring which encloses part of the gamma chain. F(1) is attached to F(0) by a central stalk formed by the gamma and epsilon chains, while a peripheral stalk is formed by the delta and b chains.

Its subcellular location is the cell membrane. In terms of biological role, f(1)F(0) ATP synthase produces ATP from ADP in the presence of a proton or sodium gradient. F-type ATPases consist of two structural domains, F(1) containing the extramembraneous catalytic core and F(0) containing the membrane proton channel, linked together by a central stalk and a peripheral stalk. During catalysis, ATP synthesis in the catalytic domain of F(1) is coupled via a rotary mechanism of the central stalk subunits to proton translocation. Component of the F(0) channel, it forms part of the peripheral stalk, linking F(1) to F(0). The chain is ATP synthase subunit b from Desulforudis audaxviator (strain MP104C).